The primary structure comprises 260 residues: UPF0328 protein ECU07_1870/ECU10_0030 (260 aa).

This sequence belongs to the UPF0328 family.

The sequence is that of UPF0328 protein ECU07_1870/ECU10_0030 from Encephalitozoon cuniculi (strain GB-M1) (Microsporidian parasite).